Consider the following 476-residue polypeptide: MNFETVIGLEVHVELKTQSKIFSSSPTPFGAAANTQTSVIDLGYPGVLPVLNKEAVNFAMKAAMALNCEIATDTKFDRKNYFYPDNPKAYQISQFDKPIGENGWIEIEVEGKTKRIGITRLHLEEDAGKLTHTGDGYSLVDFNRQGTPLVEIVSEPDIRTPEEAYAYLEKLKSIIQYTGVSDCKMEEGSLRCDANISLRPIGREEFGTKTELKNLNSFAFVQKGLEFEEKRQEQVLLSGGLIEQETRRYDEASKKTILMRVKEGSDDYRYFPEPDLVELYIDDEWKERVRASIPELPDERRKRYIDDLGLPAYDAMVLTLTKEMSDFFEATITEGAEAKQASNWLMGEVSAYLNSAQKELEDTKLTPQGLAGMIKLIEKGTISSKIAKKVFKELIENGGDAETIVKEKGLVQISDEGALLKLVTEALDNNPQSIEDFRNGKDRAIGFLVGQIMKASKGQANPPMVNKILLEEIKKR.

Belongs to the GatB/GatE family. GatB subfamily. As to quaternary structure, heterotrimer of A, B and C subunits.

The enzyme catalyses L-glutamyl-tRNA(Gln) + L-glutamine + ATP + H2O = L-glutaminyl-tRNA(Gln) + L-glutamate + ADP + phosphate + H(+). The catalysed reaction is L-aspartyl-tRNA(Asn) + L-glutamine + ATP + H2O = L-asparaginyl-tRNA(Asn) + L-glutamate + ADP + phosphate + 2 H(+). Functionally, allows the formation of correctly charged Asn-tRNA(Asn) or Gln-tRNA(Gln) through the transamidation of misacylated Asp-tRNA(Asn) or Glu-tRNA(Gln) in organisms which lack either or both of asparaginyl-tRNA or glutaminyl-tRNA synthetases. The reaction takes place in the presence of glutamine and ATP through an activated phospho-Asp-tRNA(Asn) or phospho-Glu-tRNA(Gln). The chain is Aspartyl/glutamyl-tRNA(Asn/Gln) amidotransferase subunit B from Bacillus pumilus (strain SAFR-032).